Reading from the N-terminus, the 569-residue chain is CUE domain-containing protein 5 (569 aa).

Residues 17 to 60 enclose the CUE domain; that stretch reads MAEKARATLKEAFPNTDDAIIRAVLAASGYKLEPAFNALLGLSD. Disordered regions lie at residues 67 to 139, 175 to 275, and 311 to 569; these read MEQA…DDYS, DGEE…SSSA, and EELE…GKET. Positions 79–100 are enriched in basic and acidic residues; sequence AAHDDPVQRQLEEDERCARELA. The span at 104–113 shows a compositional bias: basic residues; the sequence is NSHRPERRRK. Residues 234-249 are compositionally biased toward basic and acidic residues; it reads SDPHMLNEKDFERLRL. Residues 250–274 are compositionally biased toward low complexity; sequence ESSSSPMMRRSSLNSNRRSVESSSS. Over residues 329 to 340 the composition is skewed to basic and acidic residues; the sequence is VVVEKKPDESRK. Over residues 347 to 364 the composition is skewed to polar residues; it reads ETVSEEQMGSSNAKSKVL. Composition is skewed to basic and acidic residues over residues 367–381, 399–500, and 507–558; these read EPKD…KTET, ISEK…KETD, and KEEK…KIEE.

Its subcellular location is the cytoplasm. In Schizosaccharomyces pombe (strain 972 / ATCC 24843) (Fission yeast), this protein is CUE domain-containing protein 5.